A 477-amino-acid polypeptide reads, in one-letter code: Homospermidine synthase (477 aa).

Belongs to the saccharopine dehydrogenase family. As to quaternary structure, homodimer. Requires NAD(+) as cofactor.

It catalyses the reaction 2 putrescine = sym-homospermidine + NH4(+). It carries out the reaction putrescine + spermidine = sym-homospermidine + propane-1,3-diamine. Its function is as follows. Involved in the NAD(+)-dependent synthesis of the polyamine homospermidine from putrescine. The sequence is that of Homospermidine synthase (hss) from Blastochloris viridis (Rhodopseudomonas viridis).